A 344-amino-acid chain; its full sequence is MASGVGAAFEELPHDGTCDECEPDEAPGAEEVCRECGFCYCRRHAEAHRQKFLSHHLAEYVHGSQAWTPPADGEGAGKEEAEVKVEQEREIESEAGEESESEEESESEEESETEEESEDESDEESEEDSEEEMEDEQESEAEEDNQEEGESEAEGETEAESEFDPEIEMEAERVAKRKCPDHGLDLSTYCQEDRQLICVLCPVIGAHQGHQLSTLDEAFEELRSKDSGGLKAAMIELVERLKFKSSDPKVTRDQMKMFIQQEFKKVQKVIADEEQKALHLVDIQEAMATAHVTEILADIQSHMDRLMTQMAQAKEQLDTSNESAEPKAEGDEEGPSGASEEEDT.

Disordered regions lie at residues 1-25 (MASG…EPDE) and 66-165 (AWTP…EFDP). Basic and acidic residues predominate over residues 75-92 (GAGKEEAEVKVEQEREIE). Residues 93–165 (SEAGEESESE…ETEAESEFDP (73 aa)) show a composition bias toward acidic residues. A B box-type zinc finger spans residues 174-215 (VAKRKCPDHGLDLSTYCQEDRQLICVLCPVIGAHQGHQLSTL). 4 residues coordinate Zn(2+): Cys-179, His-182, Cys-201, and His-207. A coiled-coil region spans residues 290 to 325 (AHVTEILADIQSHMDRLMTQMAQAKEQLDTSNESAE). The tract at residues 309–344 (QMAQAKEQLDTSNESAEPKAEGDEEGPSGASEEEDT) is disordered. Residues 330 to 344 (GDEEGPSGASEEEDT) are compositionally biased toward acidic residues. Phosphoserine occurs at positions 336 and 339.

As to quaternary structure, interacts (via coiled coil) with TRIM17 (via coiled coil). In terms of tissue distribution, highly expressed in testis.

In terms of biological role, may play a role in the process of differentiation and maturation of neuronal cells. May regulate the activity of TRIM17. Is a negative regulator of PAX6 expression. This chain is Tripartite motif-containing protein 44 (TRIM44), found in Homo sapiens (Human).